Consider the following 351-residue polypeptide: DNA polymerase IV (351 aa).

The UmuC domain occupies 4 to 185; sequence IIHVDMDCFF…LPLAKIPGVG (182 aa). 2 residues coordinate Mg(2+): D8 and D103. E104 is an active-site residue.

It belongs to the DNA polymerase type-Y family. Monomer. Mg(2+) is required as a cofactor.

It is found in the cytoplasm. It carries out the reaction DNA(n) + a 2'-deoxyribonucleoside 5'-triphosphate = DNA(n+1) + diphosphate. Its function is as follows. Poorly processive, error-prone DNA polymerase involved in untargeted mutagenesis. Copies undamaged DNA at stalled replication forks, which arise in vivo from mismatched or misaligned primer ends. These misaligned primers can be extended by PolIV. Exhibits no 3'-5' exonuclease (proofreading) activity. May be involved in translesional synthesis, in conjunction with the beta clamp from PolIII. In Escherichia coli (strain ATCC 8739 / DSM 1576 / NBRC 3972 / NCIMB 8545 / WDCM 00012 / Crooks), this protein is DNA polymerase IV.